A 180-amino-acid polypeptide reads, in one-letter code: Bifunctional bis(5'-adenosyl)-triphosphatase/adenylylsulfatase FHIT (180 aa).

An HIT domain is found at 27–134 (SYAFGPYKID…LPRKGGDFEK (108 aa)). Substrate-binding residues include Asn-52 and Gln-108. A Histidine triad motif motif is present at residues 119–123 (HVHIH). The active-site Tele-AMP-histidine intermediate is His-121. A substrate-binding site is contributed by His-123.

The catalysed reaction is P(1),P(3)-bis(5'-adenosyl) triphosphate + H2O = AMP + ADP + 2 H(+). The enzyme catalyses adenosine 5'-phosphosulfate + H2O = sulfate + AMP + 2 H(+). It catalyses the reaction adenosine 5'-phosphosulfate + NH4(+) = adenosine 5'-phosphoramidate + sulfate + 2 H(+). It carries out the reaction adenosine 5'-phosphoramidate + H2O = AMP + NH4(+). Functionally, possesses dinucleoside triphosphate hydrolase activity. Cleaves P(1)-P(3)-bis(5'-adenosyl) triphosphate (Ap3A) to yield AMP and ADP. Exhibits adenylylsulfatase activity, hydrolyzing adenosine 5'-phosphosulfate to yield AMP and sulfate. Exhibits adenosine 5'-monophosphoramidase activity, hydrolyzing purine nucleotide phosphoramidates with a single phosphate group such as adenosine 5'monophosphoramidate (AMP-NH2) to yield AMP and NH2. Exhibits adenylylsulfate-ammonia adenylyltransferase, catalyzing the ammonolysis of adenosine 5'-phosphosulfate resulting in the formation of adenosine 5'-phosphoramidate. This chain is Bifunctional bis(5'-adenosyl)-triphosphatase/adenylylsulfatase FHIT, found in Arabidopsis thaliana (Mouse-ear cress).